The primary structure comprises 105 residues: Putative membrane protein insertion efficiency factor (105 aa).

Belongs to the UPF0161 family.

It localises to the cell inner membrane. Functionally, could be involved in insertion of integral membrane proteins into the membrane. The sequence is that of Putative membrane protein insertion efficiency factor from Nitratidesulfovibrio vulgaris (strain DSM 19637 / Miyazaki F) (Desulfovibrio vulgaris).